The sequence spans 5251 residues: Dynein heavy chain-like protein 2 (5251 aa).

Kelch repeat units follow at residues 37 to 87 (GLFL…CYHN), 95 to 143 (YVII…LQNG), 266 to 317 (SLIL…IHGN), 318 to 367 (NLFI…LVES), and 372 to 421 (IIFI…QNNE). The tract at residues 140 to 188 (LQNGINGTNEKGYISQTDDENCSDNKYGENQDYGSNDSDSKDGEDIDKD) is disordered. The segment at 686–732 (NNIEQRNNNNDNNDNNNNDNNNNNNNDNNNNNNNNNNNNNNNNDNLN) is disordered. Residues 692–730 (NNNNDNNDNNNNDNNNNNNNDNNNNNNNNNNNNNNNNDN) show a composition bias toward low complexity. Coiled coils occupy residues 1155 to 1225 (DNII…KKIK) and 1544 to 1610 (KLNN…KLIS). Residues 1554 to 1598 (EKNKNANENSNEIETNKYNKKEELTNNRDGDGDDDDNIKNDKDEK) are disordered. The segment covering 1567-1583 (ETNKYNKKEELTNNRDG) has biased composition (basic and acidic residues). The Kelch 6 repeat unit spans residues 1639-1685 (HIKYTLKYYITNLFRLKDLFNNEKEKWIDENYLAQVFILCNTIFFVN). The segment at 1802–1825 (HQEGKQEYNNKNNDNDNNNNNNNN) is disordered. A compositionally biased stretch (low complexity) spans 1810-1825 (NNKNNDNDNNNNNNNN). 1895-1902 (GPAGTGKT) serves as a coordination point for ATP. Positions 2136 to 2188 (NDINENKKEKDNIEELKSDNVKEEKKTKKKHLEDNNNNKKKELFNLNNIEKEL) form a coiled coil. The segment at 2152–2171 (KSDNVKEEKKTKKKHLEDNN) is disordered. Residue 2224–2231 (GEAGCGKT) participates in ATP binding. The Kelch 7 repeat unit spans residues 2447 to 2494 (VIWCFGGFLGEKDNVNYKKSFDKYWKNTFKSIKVNRKISVFDFYVENN). Residues 2546–2553 (GKTGVGKT) and 2890–2897 (GIGGCGKT) contribute to the ATP site. 2 stretches are compositionally biased toward low complexity: residues 3138 to 3154 (DNNN…DGNN) and 3652 to 3671 (DQNF…NSTN). Disordered regions lie at residues 3138-3163 (DNNN…EGND), 3652-3686 (DQNF…NHNN), 4042-4250 (EDND…EENV), 4280-4299 (NGKI…DFEN), 4773-4824 (MDFH…ENEE), and 4910-4948 (KIIK…HSGS). Residues 4059–4086 (KMEDEEKMEEEKVDEEKMEEEKVDEEKM) are compositionally biased toward acidic residues. The span at 4087-4247 (EDEKVEEKME…EKGEEQKAEE (161 aa)) shows a compositional bias: basic and acidic residues. 2 stretches are compositionally biased toward acidic residues: residues 4289–4299 (DDLEEEEDFEN) and 4807–4823 (DDDD…EENE). Over residues 4912–4937 (IKKEKPGDNKDNKYTHDQKKETIHKE) the composition is skewed to basic and acidic residues.

It belongs to the dynein heavy chain family. In terms of assembly, consists of at least two heavy chains and a number of intermediate and light chains.

Its subcellular location is the cytoplasm. It localises to the cytoskeleton. Functionally, acts as a motor for the intracellular retrograde motility of vesicles and organelles along microtubules. Dynein has ATPase activity; the force-producing power stroke is thought to occur on release of ADP. This is Dynein heavy chain-like protein 2 from Plasmodium falciparum (isolate 3D7).